The chain runs to 214 residues: Probable transaldolase (214 aa).

Lysine 83 acts as the Schiff-base intermediate with substrate in catalysis.

It belongs to the transaldolase family. Type 3B subfamily.

It localises to the cytoplasm. The enzyme catalyses D-sedoheptulose 7-phosphate + D-glyceraldehyde 3-phosphate = D-erythrose 4-phosphate + beta-D-fructose 6-phosphate. It functions in the pathway carbohydrate degradation; pentose phosphate pathway; D-glyceraldehyde 3-phosphate and beta-D-fructose 6-phosphate from D-ribose 5-phosphate and D-xylulose 5-phosphate (non-oxidative stage): step 2/3. Functionally, transaldolase is important for the balance of metabolites in the pentose-phosphate pathway. The polypeptide is Probable transaldolase (Geotalea uraniireducens (strain Rf4) (Geobacter uraniireducens)).